Consider the following 64-residue polypeptide: DNA-directed RNA polymerase subunit omega (64 aa).

Belongs to the RNA polymerase subunit omega family. In terms of assembly, the RNAP catalytic core consists of 2 alpha, 1 beta, 1 beta' and 1 omega subunit. When a sigma factor is associated with the core the holoenzyme is formed, which can initiate transcription.

It carries out the reaction RNA(n) + a ribonucleoside 5'-triphosphate = RNA(n+1) + diphosphate. Promotes RNA polymerase assembly. Latches the N- and C-terminal regions of the beta' subunit thereby facilitating its interaction with the beta and alpha subunits. The protein is DNA-directed RNA polymerase subunit omega of Oceanobacillus iheyensis (strain DSM 14371 / CIP 107618 / JCM 11309 / KCTC 3954 / HTE831).